Reading from the N-terminus, the 236-residue chain is tRNA1(Val) (adenine(37)-N6)-methyltransferase (236 aa).

Belongs to the methyltransferase superfamily. tRNA (adenine-N(6)-)-methyltransferase family.

It is found in the cytoplasm. It catalyses the reaction adenosine(37) in tRNA1(Val) + S-adenosyl-L-methionine = N(6)-methyladenosine(37) in tRNA1(Val) + S-adenosyl-L-homocysteine + H(+). In terms of biological role, specifically methylates the adenine in position 37 of tRNA(1)(Val) (anticodon cmo5UAC). In Shewanella sp. (strain MR-7), this protein is tRNA1(Val) (adenine(37)-N6)-methyltransferase.